Reading from the N-terminus, the 448-residue chain is Cytoplasmic tRNA 2-thiolation protein 2 (448 aa).

Belongs to the CTU2/NCS2 family.

It is found in the cytoplasm. Its pathway is tRNA modification; 5-methoxycarbonylmethyl-2-thiouridine-tRNA biosynthesis. Its function is as follows. Plays a central role in 2-thiolation of mcm(5)S(2)U at tRNA wobble positions of tRNA(Lys), tRNA(Glu) and tRNA(Gln). May act by forming a heterodimer with NCS6 that ligates sulfur from thiocarboxylated URM1 onto the uridine of tRNAs at wobble position. Prior mcm(5) tRNA modification by the elongator complex is required for 2-thiolation. May also be involved in protein urmylation. This is Cytoplasmic tRNA 2-thiolation protein 2 from Lodderomyces elongisporus (strain ATCC 11503 / CBS 2605 / JCM 1781 / NBRC 1676 / NRRL YB-4239) (Yeast).